The chain runs to 213 residues: Large ribosomal subunit protein uL3 (213 aa).

Belongs to the universal ribosomal protein uL3 family. In terms of assembly, part of the 50S ribosomal subunit. Forms a cluster with proteins L14 and L19.

Its function is as follows. One of the primary rRNA binding proteins, it binds directly near the 3'-end of the 23S rRNA, where it nucleates assembly of the 50S subunit. This Bifidobacterium adolescentis (strain ATCC 15703 / DSM 20083 / NCTC 11814 / E194a) protein is Large ribosomal subunit protein uL3.